Consider the following 135-residue polypeptide: Large ribosomal subunit protein bL17 (135 aa).

Belongs to the bacterial ribosomal protein bL17 family. In terms of assembly, part of the 50S ribosomal subunit. Contacts protein L32.

The chain is Large ribosomal subunit protein bL17 from Listeria innocua serovar 6a (strain ATCC BAA-680 / CLIP 11262).